Consider the following 545-residue polypeptide: Glucose-6-phosphate isomerase (545 aa).

Glutamate 351 functions as the Proton donor in the catalytic mechanism. Residues histidine 382 and lysine 510 contribute to the active site.

The protein belongs to the GPI family.

It localises to the cytoplasm. The enzyme catalyses alpha-D-glucose 6-phosphate = beta-D-fructose 6-phosphate. It participates in carbohydrate biosynthesis; gluconeogenesis. The protein operates within carbohydrate degradation; glycolysis; D-glyceraldehyde 3-phosphate and glycerone phosphate from D-glucose: step 2/4. In terms of biological role, catalyzes the reversible isomerization of glucose-6-phosphate to fructose-6-phosphate. This is Glucose-6-phosphate isomerase from Shewanella baltica (strain OS185).